Consider the following 207-residue polypeptide: 2,3-bisphosphoglycerate-dependent phosphoglycerate mutase (207 aa).

Substrate contacts are provided by residues 10–17 (RHGQSEWN), 23–24 (TG), R62, 89–92 (ERDY), K100, 116–117 (RR), and 160–161 (GN). H11 acts as the Tele-phosphohistidine intermediate in catalysis. Catalysis depends on E89, which acts as the Proton donor/acceptor.

The protein belongs to the phosphoglycerate mutase family. BPG-dependent PGAM subfamily. Homodimer.

The enzyme catalyses (2R)-2-phosphoglycerate = (2R)-3-phosphoglycerate. The protein operates within carbohydrate degradation; glycolysis; pyruvate from D-glyceraldehyde 3-phosphate: step 3/5. Catalyzes the interconversion of 2-phosphoglycerate and 3-phosphoglycerate. This chain is 2,3-bisphosphoglycerate-dependent phosphoglycerate mutase, found in Xanthobacter autotrophicus (strain ATCC BAA-1158 / Py2).